The following is a 649-amino-acid chain: Threonine--tRNA ligase (649 aa).

One can recognise a TGS domain in the interval 1–60 (MHVTLPDGKQLDLQPGATALDAAKAIGPRLAQDALGATANGELTDLMTPLSDGASITLIT). The segment at 248-544 (DHRKLGKELE…LIEHYAGDFP (297 aa)) is catalytic. The Zn(2+) site is built by C341, H392, and H521.

The protein belongs to the class-II aminoacyl-tRNA synthetase family. Homodimer. The cofactor is Zn(2+).

Its subcellular location is the cytoplasm. The catalysed reaction is tRNA(Thr) + L-threonine + ATP = L-threonyl-tRNA(Thr) + AMP + diphosphate + H(+). Functionally, catalyzes the attachment of threonine to tRNA(Thr) in a two-step reaction: L-threonine is first activated by ATP to form Thr-AMP and then transferred to the acceptor end of tRNA(Thr). Also edits incorrectly charged L-seryl-tRNA(Thr). The protein is Threonine--tRNA ligase of Deinococcus radiodurans (strain ATCC 13939 / DSM 20539 / JCM 16871 / CCUG 27074 / LMG 4051 / NBRC 15346 / NCIMB 9279 / VKM B-1422 / R1).